Consider the following 485-residue polypeptide: Calcium-dependent protein kinase 27 (485 aa).

A lipid anchor (N-myristoyl glycine) is attached at Gly2. The region spanning 28 to 290 is the Protein kinase domain; the sequence is YILGEELGRG…AAEVLGHPWM (263 aa). Residues 34–42 and Lys57 contribute to the ATP site; that span reads LGRGNFGLT. Asp156 acts as the Proton acceptor in catalysis. Ser196 is modified (phosphoserine). The interval 295–325 is autoinhibitory domain; the sequence is ASDKPIDGVVLSRLKRFRDANKFKKVVLKFI. EF-hand domains lie at 332 to 367, 368 to 403, 404 to 439, and 444 to 474; these read EEIK…LGSN, LSKT…RYKL, DRDE…DGAG, and IKQI…ESSL. Positions 345, 347, 349, 351, 356, 381, 383, 385, 387, 392, 417, 419, 421, 423, 428, 452, 454, 456, 458, and 463 each coordinate Ca(2+).

The protein belongs to the protein kinase superfamily. Ser/Thr protein kinase family. CDPK subfamily.

The protein resides in the membrane. The catalysed reaction is L-seryl-[protein] + ATP = O-phospho-L-seryl-[protein] + ADP + H(+). It catalyses the reaction L-threonyl-[protein] + ATP = O-phospho-L-threonyl-[protein] + ADP + H(+). With respect to regulation, activated by calcium. Autophosphorylation may play an important role in the regulation of the kinase activity. Its function is as follows. May play a role in signal transduction pathways that involve calcium as a second messenger. This Arabidopsis thaliana (Mouse-ear cress) protein is Calcium-dependent protein kinase 27 (CPK27).